The primary structure comprises 330 residues: Phenylalanine--tRNA ligase alpha subunit (330 aa).

A Mg(2+)-binding site is contributed by E246.

The protein belongs to the class-II aminoacyl-tRNA synthetase family. Phe-tRNA synthetase alpha subunit type 1 subfamily. Tetramer of two alpha and two beta subunits. The cofactor is Mg(2+).

It is found in the cytoplasm. The catalysed reaction is tRNA(Phe) + L-phenylalanine + ATP = L-phenylalanyl-tRNA(Phe) + AMP + diphosphate + H(+). This is Phenylalanine--tRNA ligase alpha subunit from Sulfurovum sp. (strain NBC37-1).